Reading from the N-terminus, the 314-residue chain is Acetaldehyde dehydrogenase (314 aa).

15–18 (SGNI) is a binding site for NAD(+). The active-site Acyl-thioester intermediate is cysteine 133. Residues 164–172 (SAGPGTRAN) and asparagine 292 each bind NAD(+).

This sequence belongs to the acetaldehyde dehydrogenase family.

It catalyses the reaction acetaldehyde + NAD(+) + CoA = acetyl-CoA + NADH + H(+). This chain is Acetaldehyde dehydrogenase, found in Paraburkholderia phytofirmans (strain DSM 17436 / LMG 22146 / PsJN) (Burkholderia phytofirmans).